Reading from the N-terminus, the 264-residue chain is MMNVGQWLTRVRKESPLVHNMTNVVVTNFVANGLLAVGASPVMAYAKEEVADMVRLARALVLNIGTLNETDVEAMLIAGKAANEANIPVIFDPVGAGATAYRTETARRILREVNISILRGNASEIASIAGEQVRTKGVDAGDVQSDLVDVAKKAAHMFRCVVVITGKDDIVTDGERIVIVSNGDAMLTKVTGTGCLLSSVLGAFAGVGEDVMTSSVAALAYYGVAAEKAATQAKAPGSFQLSFLNALHETSAEEVDQYARIQGE.

M43 lines the substrate pocket. ATP is bound by residues R119 and T165. G192 provides a ligand contact to substrate.

Belongs to the Thz kinase family. The cofactor is Mg(2+).

The enzyme catalyses 5-(2-hydroxyethyl)-4-methylthiazole + ATP = 4-methyl-5-(2-phosphooxyethyl)-thiazole + ADP + H(+). It participates in cofactor biosynthesis; thiamine diphosphate biosynthesis; 4-methyl-5-(2-phosphoethyl)-thiazole from 5-(2-hydroxyethyl)-4-methylthiazole: step 1/1. Catalyzes the phosphorylation of the hydroxyl group of 4-methyl-5-beta-hydroxyethylthiazole (THZ). The polypeptide is Hydroxyethylthiazole kinase (Anoxybacillus flavithermus (strain DSM 21510 / WK1)).